Consider the following 138-residue polypeptide: Phosphoribosyl-AMP cyclohydrolase (138 aa).

The disordered stretch occupies residues 1-23 (MSEQSAPSPTPAAELSSDPASPL). Asp-100 is a binding site for Mg(2+). Residue Cys-101 participates in Zn(2+) binding. Residues Asp-102 and Asp-104 each coordinate Mg(2+). 2 residues coordinate Zn(2+): Cys-117 and Cys-124.

Belongs to the PRA-CH family. In terms of assembly, homodimer. The cofactor is Mg(2+). It depends on Zn(2+) as a cofactor.

The protein localises to the cytoplasm. It catalyses the reaction 1-(5-phospho-beta-D-ribosyl)-5'-AMP + H2O = 1-(5-phospho-beta-D-ribosyl)-5-[(5-phospho-beta-D-ribosylamino)methylideneamino]imidazole-4-carboxamide. The protein operates within amino-acid biosynthesis; L-histidine biosynthesis; L-histidine from 5-phospho-alpha-D-ribose 1-diphosphate: step 3/9. In terms of biological role, catalyzes the hydrolysis of the adenine ring of phosphoribosyl-AMP. The polypeptide is Phosphoribosyl-AMP cyclohydrolase (Paenarthrobacter aurescens (strain TC1)).